The sequence spans 916 residues: Chitin synthase B (916 aa).

Disordered stretches follow at residues Met-1–Leu-75 and Ala-118–Gly-141. The span at His-14 to Ser-26 shows a compositional bias: basic and acidic residues. The segment covering Arg-59 to Leu-75 has biased composition (polar residues). Transmembrane regions (helical) follow at residues Arg-544 to Gly-561, Phe-588 to Val-608, Ile-629 to Ala-649, Ser-664 to Val-684, Ile-716 to Leu-736, Leu-845 to Leu-865, and Ala-884 to Leu-904.

The protein belongs to the chitin synthase family. Class III subfamily. As to quaternary structure, interacts with kibesin kinA. In terms of processing, activity requires trypsin activation, suggesting a zymogenic nature. Phosphorylated at yet unidentified residues in a N-terminal disordered region-dependent manner.

It localises to the cell membrane. The protein localises to the cell tip. The protein resides in the cell septum. The catalysed reaction is [(1-&gt;4)-N-acetyl-beta-D-glucosaminyl](n) + UDP-N-acetyl-alpha-D-glucosamine = [(1-&gt;4)-N-acetyl-beta-D-glucosaminyl](n+1) + UDP + H(+). Activity is stimulated by Mg(2+) and is inhibited by polyoxin D. Polymerizes chitin, a structural polymer of the cell wall and septum, by transferring the sugar moiety of UDP-GlcNAc to the non-reducing end of the growing chitin polymer. Does not substantially contribute to the rigidity of the cell wall but is necessary for normal hyphal growth and organization. In addition to its functions in the formation of normal cell walls of hyphae, is also involved in conidiophore and conidia development. The protein is Chitin synthase B of Emericella nidulans (strain FGSC A4 / ATCC 38163 / CBS 112.46 / NRRL 194 / M139) (Aspergillus nidulans).